A 327-amino-acid polypeptide reads, in one-letter code: 2-oxoisovalerate dehydrogenase subunit beta (327 aa).

Thiamine diphosphate is bound by residues E29, 58 to 60, Q82, and 86 to 89; these read LAE and FIMP. Residues 83 to 86 and H129 contribute to the substrate site; that span reads FADF. The active-site Proton acceptor is H129.

Heterotetramer of two alpha and two beta chains. Directly associated with ODBA in the E1 complex. Requires thiamine diphosphate as cofactor.

It catalyses the reaction N(6)-[(R)-lipoyl]-L-lysyl-[protein] + 3-methyl-2-oxobutanoate + H(+) = N(6)-[(R)-S(8)-2-methylpropanoyldihydrolipoyl]-L-lysyl-[protein] + CO2. Functionally, the branched-chain alpha-keto dehydrogenase complex catalyzes the overall conversion of alpha-keto acids to acyl-CoA and CO(2). It contains multiple copies of three enzymatic components: branched-chain alpha-keto acid decarboxylase (E1), lipoamide acyltransferase (E2) and lipoamide dehydrogenase (E3). The polypeptide is 2-oxoisovalerate dehydrogenase subunit beta (bfmBAB) (Bacillus subtilis (strain 168)).